The primary structure comprises 267 residues: Tryptophan synthase alpha chain (267 aa).

Catalysis depends on proton acceptor residues E47 and D58.

It belongs to the TrpA family. In terms of assembly, tetramer of two alpha and two beta chains.

It catalyses the reaction (1S,2R)-1-C-(indol-3-yl)glycerol 3-phosphate + L-serine = D-glyceraldehyde 3-phosphate + L-tryptophan + H2O. It functions in the pathway amino-acid biosynthesis; L-tryptophan biosynthesis; L-tryptophan from chorismate: step 5/5. Its function is as follows. The alpha subunit is responsible for the aldol cleavage of indoleglycerol phosphate to indole and glyceraldehyde 3-phosphate. The polypeptide is Tryptophan synthase alpha chain (Chlorobium phaeovibrioides (strain DSM 265 / 1930) (Prosthecochloris vibrioformis (strain DSM 265))).